A 184-amino-acid polypeptide reads, in one-letter code: Photosystem I assembly protein Ycf4 (184 aa).

The next 2 membrane-spanning stretches (helical) occupy residues 19 to 39 and 57 to 77; these read ISNFCWAFILFLGSLGFVLVG and ILFFPQGIVMSFYGIAGLFIS.

It belongs to the Ycf4 family.

It localises to the plastid. The protein resides in the chloroplast thylakoid membrane. Seems to be required for the assembly of the photosystem I complex. This Eucalyptus globulus subsp. globulus (Tasmanian blue gum) protein is Photosystem I assembly protein Ycf4.